We begin with the raw amino-acid sequence, 106 residues long: Small ribosomal subunit protein uS10 (106 aa).

The protein belongs to the universal ribosomal protein uS10 family. In terms of assembly, part of the 30S ribosomal subunit.

Its function is as follows. Involved in the binding of tRNA to the ribosomes. This Prochlorococcus marinus subsp. pastoris (strain CCMP1986 / NIES-2087 / MED4) protein is Small ribosomal subunit protein uS10.